Here is a 285-residue protein sequence, read N- to C-terminus: MKFRRSGRLVDLTNYLLTHPHELIPLTFFSERYESAKSSISEDLTIIKQTFEQQGIGTLLTVPGAAGGVKYIPKMKQAEAEEFVQTLGQSLANPERILPGGYVYLTDILGKPSVLSKVGKLFASVFAEREIDVVMTVATKGIPLAYAAASYLNVPVVIVRKDNKVTEGSTVSINYVSGSSNRIQTMSLAKRSMKTGSNVLIIDDFMKAGGTINGMINLLDEFNANVAGIGVLVEAEGVDERLVDEYMSLLTLSTINMKEKSIEIQNGNFLRFFKDNLLKNGETES.

Residues 1-73 form a DNA binding domain region; it reads MKFRRSGRLV…GAAGGVKYIP (73 aa). The interval 74–285 is effector binding domain; the sequence is KMKQAEAEEF…NLLKNGETES (212 aa). Guanosine 3',5'-bis(diphosphate) is bound at residue Tyr-102. The 5-phospho-alpha-D-ribose 1-diphosphate site is built by Ala-138, Thr-139, Lys-140, and Arg-160. The guanosine 3',5'-bis(diphosphate) site is built by Gly-178 and Ser-179. Residues Asp-203, Asp-204, Phe-205, Lys-207, and Ala-208 each coordinate 5-phospho-alpha-D-ribose 1-diphosphate. Residue Lys-207 participates in guanosine 3',5'-bis(diphosphate) binding. Residues Gly-209, Gly-210, and Thr-211 each contribute to the guanosine 3',5'-bis(diphosphate) site. Thr-211 is a binding site for 5-phospho-alpha-D-ribose 1-diphosphate.

It belongs to the purine/pyrimidine phosphoribosyltransferase family. PurR subfamily. Homodimer.

Its activity is regulated as follows. The binding of PurR to DNA, and therefore the repressor activity, is influenced by interaction with the effector molecules 5-phosphoribosyl 1-pyrophosphate (PRPP) and (p)ppGpp. PRPP binds to PurR and reduces affinity of PurR for DNA, which inhibits the repressor activity and induces transcription of the target genes. On the contrary, (p)ppGpp enhances binding of PurR to DNA and repression of the transcription. PRPP and (p)ppGpp compete for PurR binding and allosteric control of transcription. ppGpp maintains PurR-DNA interaction and prevents PRPP from de-repressing PurR regulation during conditions that lead to (p)ppGpp induction, such as upon amino acid starvation. Its function is as follows. DNA-binding transcriptional repressor that controls the expression of a number of genes involved in the synthesis, metabolism and transport of purines. In response to a signal of excess adenine, represses the transcription of the pur operon, which encodes enzymes of the purine biosynthetic pathway. It also represses the expression of the purA and purR genes. In addition, controls the expression of several other genes or operons, which encode enzymes or transporters playing a role in purine nucleotide metabolism. Acts by binding directly to specific DNA sequences, named PurBoxes, in the upstream control regions of affected genes. Two PurBoxes are required for high-affinity PurR binding. Also responds to amino acid starvation via (p)ppGpp, which strongly increases PurR activity and repression of purine nucleotide biosynthesis genes. The protein is Purine biosynthesis transcriptional repressor PurR of Bacillus subtilis (strain 168).